A 259-amino-acid chain; its full sequence is MASQVRSVKVGNLSSGATEHDIKEFFSFSGEVESIDIQSNEHSAYVTFKETQGAETAVLLSGASIADQSVIIELAPNYSPPAAPHAETQSSGAESVVQKAEDVVSSMLAKGFILGKDAVGKAKAFDEKHGFTSTATAGVASLDQKIGLSQKLTAGTSLVNEKIKAVDQNFQVTERTKSVYAAAEQTVSSAGSAVMKNRYVLTGVSWAAGAFNRVAQAAGEVGQKTKEKVEAEQPSQPAQSQQQLPEGYSPIHSSEYSKN.

One can recognise an RRM domain in the interval 6–77 (RSVKVGNLSS…QSVIIELAPN (72 aa)). The disordered stretch occupies residues 219–259 (GEVGQKTKEKVEAEQPSQPAQSQQQLPEGYSPIHSSEYSKN). Residues 232-243 (EQPSQPAQSQQQ) are compositionally biased toward low complexity.

Interacts with ACD11, PR1F2 and PR1F3.

The protein resides in the cytoplasm. It is found in the membrane. This Arabidopsis thaliana (Mouse-ear cress) protein is Binding partner of ACD11 1 (BPA1).